Consider the following 333-residue polypeptide: Probable HTH-type transcriptional repressor ExuR (333 aa).

Residues 2–56 (VTIKDIAKLANVSHTTVSRALNNSPYIKEHTKKKILELAEQLNYTPNVNAKSLAM) form the HTH lacI-type domain. The segment at residues 4-23 (IKDIAKLANVSHTTVSRALN) is a DNA-binding region (H-T-H motif).

Functionally, transcriptional repressor for the exu locus which is required for galacturonate utilization. The chain is Probable HTH-type transcriptional repressor ExuR (exuR) from Bacillus subtilis (strain 168).